A 315-amino-acid chain; its full sequence is Homoserine kinase (315 aa).

ATP is bound at residue 97-107 (PPARGLGSSAT).

Belongs to the GHMP kinase family. Homoserine kinase subfamily.

The protein localises to the cytoplasm. The catalysed reaction is L-homoserine + ATP = O-phospho-L-homoserine + ADP + H(+). It participates in amino-acid biosynthesis; L-threonine biosynthesis; L-threonine from L-aspartate: step 4/5. Its function is as follows. Catalyzes the ATP-dependent phosphorylation of L-homoserine to L-homoserine phosphate. This is Homoserine kinase from Prochlorococcus marinus (strain SARG / CCMP1375 / SS120).